A 396-amino-acid chain; its full sequence is S-adenosylmethionine synthase (396 aa).

His15 provides a ligand contact to ATP. Asp17 contributes to the Mg(2+) binding site. Glu43 provides a ligand contact to K(+). L-methionine is bound by residues Glu56 and Gln99. The flexible loop stretch occupies residues Gln99–Arg109. ATP is bound by residues Asp175–Lys177, Arg241–Phe242, Asp250, Arg256–Lys257, Ser273, and Lys277. L-methionine is bound at residue Asp250. Residue Lys281 participates in L-methionine binding.

Belongs to the AdoMet synthase family. In terms of assembly, homotetramer; dimer of dimers. It depends on Mg(2+) as a cofactor. Requires K(+) as cofactor.

It is found in the cytoplasm. The enzyme catalyses L-methionine + ATP + H2O = S-adenosyl-L-methionine + phosphate + diphosphate. Its pathway is amino-acid biosynthesis; S-adenosyl-L-methionine biosynthesis; S-adenosyl-L-methionine from L-methionine: step 1/1. Catalyzes the formation of S-adenosylmethionine (AdoMet) from methionine and ATP. The overall synthetic reaction is composed of two sequential steps, AdoMet formation and the subsequent tripolyphosphate hydrolysis which occurs prior to release of AdoMet from the enzyme. This is S-adenosylmethionine synthase from Pelotomaculum thermopropionicum (strain DSM 13744 / JCM 10971 / SI).